The following is a 313-amino-acid chain: Dehydrodolichyl diphosphate synthase CPT5, chloroplastic (313 aa).

The transit peptide at 1-42 (MAFSFQLQQVFPFPVKFCSQPKSIKLQIFPNLTKRLPIHPLA) directs the protein to the chloroplast. Asp89 is an active-site residue.

It belongs to the UPP synthase family. Mg(2+) is required as a cofactor. As to expression, expressed in leaf trichomes, stem trichomes and old leaves. Expressed at low levels in young leaves and flowers.

Its subcellular location is the plastid. The protein localises to the chloroplast. The catalysed reaction is n isopentenyl diphosphate + (2E,6E)-farnesyl diphosphate = a di-trans,poly-cis-polyprenyl diphosphate + n diphosphate. Catalyzes cis-prenyl chain elongation to produce the polyprenyl backbone of dolichol, a glycosyl carrier-lipid required for the biosynthesis of several classes of glycoprotein. This chain is Dehydrodolichyl diphosphate synthase CPT5, chloroplastic, found in Solanum lycopersicum (Tomato).